The sequence spans 249 residues: Kallikrein-7 (249 aa).

Residues 1 to 21 (MGVWLLSLITVLLSLALETAG) form the signal peptide. Residues 22–25 (QGER) constitute a propeptide, activation peptide. A serine protease region spans residues 26–246 (IIDGYKCKEG…YKRWVMETMK (221 aa)). 6 disulfides stabilise this stretch: Cys-32-Cys-161, Cys-51-Cys-67, Cys-133-Cys-235, Cys-140-Cys-207, Cys-172-Cys-186, and Cys-197-Cys-222. Catalysis depends on charge relay system residues His-66 and Asp-108. The Charge relay system role is filled by Ser-201.

It belongs to the peptidase S1 family. Kallikrein subfamily. In terms of tissue distribution, expressed in skin and, at lower levels, in lung, kidney, brain, heart and spleen. In skin, expressed in high suprabasal keratinocytes and in the luminal parts of hair follicles. Not detected in liver and skeletal muscle.

Its subcellular location is the secreted. The catalysed reaction is Cleavage of proteins with aromatic side chains in the P1 position.. With respect to regulation, inhibited by Zn2+ and Cu2+ at low micromolar concentrations. Inhibited by SERPINA12. In terms of biological role, may catalyze the degradation of intercellular cohesive structures in the cornified layer of the skin in the continuous shedding of cells from the skin surface. Specific for amino acid residues with aromatic side chains in the P1 position. Cleaves insulin A chain at '14-Tyr-|-Gln-15' and insulin B chain at '6-Leu-|-Cys-7', '16-Tyr-|-Leu-17', '25-Phe-|-Tyr-26' and '26-Tyr-|-Thr-27'. Could play a role in the activation of precursors to inflammatory cytokines. This Mus musculus (Mouse) protein is Kallikrein-7 (Klk7).